A 558-amino-acid polypeptide reads, in one-letter code: Glucose-6-phosphate isomerase (558 aa).

E363 acts as the Proton donor in catalysis. Active-site residues include H394 and K522.

This sequence belongs to the GPI family.

Its subcellular location is the cytoplasm. The catalysed reaction is alpha-D-glucose 6-phosphate = beta-D-fructose 6-phosphate. It functions in the pathway carbohydrate biosynthesis; gluconeogenesis. The protein operates within carbohydrate degradation; glycolysis; D-glyceraldehyde 3-phosphate and glycerone phosphate from D-glucose: step 2/4. In terms of biological role, catalyzes the reversible isomerization of glucose-6-phosphate to fructose-6-phosphate. The chain is Glucose-6-phosphate isomerase from Blochmanniella floridana.